Consider the following 282-residue polypeptide: HTH-type transcriptional activator RhaR (282 aa).

Residues Asp179 to Leu277 enclose the HTH araC/xylS-type domain. DNA-binding regions (H-T-H motif) lie at residues Asp196–Thr217 and Ile244–Thr267.

Binds DNA as a dimer.

The protein resides in the cytoplasm. Its function is as follows. Activates expression of the rhaSR operon in response to L-rhamnose. This chain is HTH-type transcriptional activator RhaR, found in Salmonella dublin (strain CT_02021853).